The sequence spans 871 residues: MLGRRLAGAKPQSGALFKRFVVIPASSKARRRRRDVGGIRKNVSVEELELDKALDLRDPKELEFKLRQLREFTKNLATQIRVADDLVKKEAAQKELGNKSKEEDTADAASVILGTHNHHDRYQRRSLLQGEDLSSIILSVSHQVKKLLPEAILKRINDDELVLRSLINHRNSDWNAIISKLDQSPEKLDGVSQRALKNYILSKAKNLSLGSIRKADAMLLSNINHDLTKFNTSMYEFLFYNLSNLKPSQDPSSKYNNEVYTVMESLLDRYDEAQKVIAGKNVAIEAQEGIMPKVEMNQFILNCCIKFASKLLDVSKMNRFLTKFNRDYHILPNKENYTVIAQFYTKLGLHDKAWDIFATMKFLSADHKPDAKTYTCMLSLCNKEKNYAKAIDLFNEMIDLKVDPTPETLNALVKTLATVSGDPVASEGKAESLRLLAWKYLHQNEDLVNLRSGNFEDTILAMMSLCAYDGDAGLARALYFKYITTRFKSNFESWRMRQGDHSSVDYKKVWASTLNPFLFNYLMLAYANYSPGKLPLLLGFEQGAVTRRNLINNVDYLYKFQNDEAGPRAKLPMLPLADISEPSQILLESRAVWQFNLEFGGLCDLRISPLGSSKVLKDLAASAESIEDFSFQVLHQIALWKTQIVNHNALNPKSIMTYLTIPLKLGEKKEFLLRMSEFSYEQQTFEQHISSLYMNTKQQLLTARPGSSTHLTHSEIKKQPSSQTSFNEESSLAFLSSMKHKIIRNSSIYELTMKAAIRFQDQALATKAWESRGSYRKTLAFQNLPVAERTKKDAAFASLMVDFFTQQQMYTDAMGIIMASQRHISWRYPMVKRLHRKLVELEDTRSIKILMEIVNKRSKSDSSAEAVTSLG.

The transit peptide at 1 to 72 (MLGRRLAGAK…EFKLRQLREF (72 aa)) directs the protein to the mitochondrion. PPR repeat units follow at residues 333 to 369 (NKEN…DHKP) and 370 to 404 (DAKT…KVDP). Residues 704 to 724 (RPGSSTHLTHSEIKKQPSSQT) are disordered.

Belongs to the CCM1 family. In terms of assembly, binds to mitochondrial small subunit 15S rRNA.

The protein resides in the mitochondrion. Functionally, regulates mitochondrial small subunit maturation by controlling 15S rRNA 5'-end processing. Localizes to the 5' precursor of the 15S rRNA in a position that is subsequently occupied by mS47 in the mature yeast mtSSU. Uses structure and sequence-specific RNA recognition, binding to a single-stranded region of the precursor and specifically recognizing bases -6 to -1. The exchange of Ccm1 for mS47 is coupled to the irreversible removal of precursor rRNA that is accompanied by conformational changes of the mitoribosomal proteins uS5m and mS26. These conformational changes signal completion of 5'-end rRNA processing through protection of the mature 5'-end of the 15S rRNA and stabilization of mS47. The removal of the 5' precursor together with the dissociation of Ccm1 may be catalyzed by the 5'-3' exoribonuclease Pet127. Involved in the specific removal of group I introns in mitochondrial encoded transcripts. This Lachancea thermotolerans (strain ATCC 56472 / CBS 6340 / NRRL Y-8284) (Yeast) protein is Mitochondrial 15S rRNA processing factor CCM1 (CCM1).